Consider the following 371-residue polypeptide: Dual-specificity RNA methyltransferase RlmN (371 aa).

E86 functions as the Proton acceptor in the catalytic mechanism. Residues 105–338 enclose the Radical SAM core domain; the sequence is RHARYTICVS…CTIRQSKGLD (234 aa). Cysteines 112 and 343 form a disulfide. 3 residues coordinate [4Fe-4S] cluster: C119, C123, and C126. S-adenosyl-L-methionine-binding positions include 169-170, S201, 224-226, and N300; these read GE and SLH. Catalysis depends on C343, which acts as the S-methylcysteine intermediate. Residues 348 to 363 are compositionally biased toward polar residues; the sequence is QRSQNLSPSNNNTSKP. The tract at residues 348–371 is disordered; that stretch reads QRSQNLSPSNNNTSKPSDIKKSES.

Belongs to the radical SAM superfamily. RlmN family. [4Fe-4S] cluster serves as cofactor.

The protein localises to the cytoplasm. It catalyses the reaction adenosine(2503) in 23S rRNA + 2 reduced [2Fe-2S]-[ferredoxin] + 2 S-adenosyl-L-methionine = 2-methyladenosine(2503) in 23S rRNA + 5'-deoxyadenosine + L-methionine + 2 oxidized [2Fe-2S]-[ferredoxin] + S-adenosyl-L-homocysteine. The catalysed reaction is adenosine(37) in tRNA + 2 reduced [2Fe-2S]-[ferredoxin] + 2 S-adenosyl-L-methionine = 2-methyladenosine(37) in tRNA + 5'-deoxyadenosine + L-methionine + 2 oxidized [2Fe-2S]-[ferredoxin] + S-adenosyl-L-homocysteine. Its function is as follows. Specifically methylates position 2 of adenine 2503 in 23S rRNA and position 2 of adenine 37 in tRNAs. m2A2503 modification seems to play a crucial role in the proofreading step occurring at the peptidyl transferase center and thus would serve to optimize ribosomal fidelity. The sequence is that of Dual-specificity RNA methyltransferase RlmN from Campylobacter curvus (strain 525.92).